We begin with the raw amino-acid sequence, 38 residues long: Large ribosomal subunit protein bL36 (38 aa).

Belongs to the bacterial ribosomal protein bL36 family.

The protein is Large ribosomal subunit protein bL36 of Amoebophilus asiaticus (strain 5a2).